We begin with the raw amino-acid sequence, 529 residues long: Peptide chain release factor 3 (529 aa).

The 270-residue stretch at 11–280 folds into the tr-type G domain; that stretch reads AKRRTFAIIS…GLVEWAPAPM (270 aa). Residues 20–27, 88–92, and 142–145 contribute to the GTP site; these read SHPDAGKT, DTPGH, and NKLD.

It belongs to the TRAFAC class translation factor GTPase superfamily. Classic translation factor GTPase family. PrfC subfamily.

The protein localises to the cytoplasm. Functionally, increases the formation of ribosomal termination complexes and stimulates activities of RF-1 and RF-2. It binds guanine nucleotides and has strong preference for UGA stop codons. It may interact directly with the ribosome. The stimulation of RF-1 and RF-2 is significantly reduced by GTP and GDP, but not by GMP. The protein is Peptide chain release factor 3 of Shigella sonnei (strain Ss046).